The primary structure comprises 397 residues: Na(+)/H(+) antiporter NhaA 2 (397 aa).

The next 11 helical transmembrane spans lie at 9–29 (LHNP…AMAV), 59–79 (LLLW…GLEL), 95–115 (ILPV…YTLI), 125–145 (GWAI…ALLG), 154–174 (LFLL…IAFF), 177–197 (SELS…LILM), 222–242 (SGVH…LKGE), 260–280 (VVGL…SLQG), 292–312 (LGIA…FVWL), 332–352 (GVAL…SLAF), and 371–391 (LGIL…LRFS).

The protein belongs to the NhaA Na(+)/H(+) (TC 2.A.33) antiporter family.

It localises to the cell inner membrane. The enzyme catalyses Na(+)(in) + 2 H(+)(out) = Na(+)(out) + 2 H(+)(in). In terms of biological role, na(+)/H(+) antiporter that extrudes sodium in exchange for external protons. The chain is Na(+)/H(+) antiporter NhaA 2 from Magnetococcus marinus (strain ATCC BAA-1437 / JCM 17883 / MC-1).